Consider the following 331-residue polypeptide: Ribosomal RNA small subunit methyltransferase C (331 aa).

Belongs to the methyltransferase superfamily. RsmC family. Monomer.

It localises to the cytoplasm. It carries out the reaction guanosine(1207) in 16S rRNA + S-adenosyl-L-methionine = N(2)-methylguanosine(1207) in 16S rRNA + S-adenosyl-L-homocysteine + H(+). In terms of biological role, specifically methylates the guanine in position 1207 of 16S rRNA in the 30S particle. This is Ribosomal RNA small subunit methyltransferase C from Pseudomonas putida (strain W619).